The chain runs to 378 residues: Ret finger protein-like 2 (378 aa).

Residues 101–143 (CPVCSDYLEKPMSLECGCAVCLKCINSLQKEPHGEDLLCCCSS) form an RING-type; degenerate zinc finger. In terms of domain architecture, B30.2/SPRY spans 168–362 (EPKLKKILQM…DQGVLSICPL (195 aa)).

In terms of tissue distribution, seems to be expressed in prostate and less abundantly in adult brain, fetal liver, and fetal kidney.

The chain is Ret finger protein-like 2 (RFPL2) from Homo sapiens (Human).